Reading from the N-terminus, the 568-residue chain is Putative ABC transporter ATP-binding protein CPE1583 (568 aa).

ABC transporter domains follow at residues 7–248 and 303–536; these read IEFK…GIRE and LEFK…ASLK. ATP is bound by residues 41–48 and 336–343; these read GPSGSGKS and GKNGAGKS.

It belongs to the ABC transporter superfamily.

It is found in the cell membrane. Probably part of an ABC transporter complex. Responsible for energy coupling to the transport system. This Clostridium perfringens (strain 13 / Type A) protein is Putative ABC transporter ATP-binding protein CPE1583.